Reading from the N-terminus, the 725-residue chain is N-alpha-acetyltransferase 35, NatC auxiliary subunit (725 aa).

The tract at residues 548–573 is disordered; the sequence is ERIMEEQQKGRSSKKTKKKKKVRPLS. Residues 558–571 show a composition bias toward basic residues; sequence RSSKKTKKKKKVRP.

It belongs to the MAK10 family. Component of the N-terminal acetyltransferase C (NatC) complex.

The protein localises to the cytoplasm. In terms of biological role, auxillary component of the N-terminal acetyltransferase C (NatC) complex which catalyzes acetylation of N-terminal methionine residues. N-terminal acetylation protects proteins from ubiquitination and degradation by the N-end rule pathway. This is N-alpha-acetyltransferase 35, NatC auxiliary subunit (NAA35) from Gallus gallus (Chicken).